Consider the following 174-residue polypeptide: Shikimate kinase 2 (174 aa).

Residue 12-17 (GAGKTT) coordinates ATP. Threonine 16 and aspartate 32 together coordinate Mg(2+). 3 residues coordinate substrate: aspartate 34, arginine 58, and glycine 79. Residues 112-126 (AEDPEDAQRPSLTGK) form an LID domain region. Arginine 120 lines the ATP pocket. Residue arginine 139 participates in substrate binding. Glutamine 155 contributes to the ATP binding site.

The protein belongs to the shikimate kinase family. AroL subfamily. As to quaternary structure, monomer. Mg(2+) is required as a cofactor.

The protein resides in the cytoplasm. It carries out the reaction shikimate + ATP = 3-phosphoshikimate + ADP + H(+). It participates in metabolic intermediate biosynthesis; chorismate biosynthesis; chorismate from D-erythrose 4-phosphate and phosphoenolpyruvate: step 5/7. Catalyzes the specific phosphorylation of the 3-hydroxyl group of shikimic acid using ATP as a cosubstrate. The chain is Shikimate kinase 2 from Yersinia enterocolitica serotype O:8 / biotype 1B (strain NCTC 13174 / 8081).